A 769-amino-acid polypeptide reads, in one-letter code: MDIGKKHVIPKSQYRRKRREFFHNEDREENLNQHQDKQNIDNTTSKKADKQIHKDSIDKHERFKNSLSSHLEQRNRDVNENKAEESKSNQDSKSAYNRDHYLTDDVSKKQNSLDSVDQDTEKSKYYEQNSEATLSTKSTDKVESTDMRKLSSDKNKVGHEEQHVLSKPSEHDKETRIDFESSRTDSDSSMQTEKIKKDSSDGNKSSNLKSEVISDKSNTVPKLSESDDEVNNQKPLTLPEEQKLKRQQSQNEQTKTYTYGDSEQNDKSNYENDLSHHMPSISDDKDNVMRENHIVDDNPDNDINTPSLSKTDDDRKLDEKIHVEDKHKQNADSSETVGYQSQSSASHRITEKRNNAINDHDKLNGQKPNAKTSANNNQKKATSKLNKGRATNNNYSDILKKFWMMYWPKLVILMGIIILIVILNAIFNNVNKNDRMNDNNDADAQKYTTTMKNANNTVKSVVTVENETSKDSSLPKDKASQDEVGSGVVYKKSGDTLYIVTNAHVVGDKENQKITFSNNKSVVGKVLGKDKWSDLAVVKATSSDSSVKEIAIGDSNNLVLGEPILVVGNPLGVDFKGTVTEGIISGLNRNVPIDFDKDNKYDMLMKAFQIDASVNPGNSGGAVVNREGKLIGVVAAKISMPNVENMSFAIPVNEVQKIVKDLETKGKIDYPDVGVKMKNIASLNSFERQAVKLPGKVKNGVVVDQVDNNGLADQSGLKKGDVITELDGKLLEDDLRFRQIIFSHKDDLKSITAKIYRDGKEKEINIKLK.

Residues 1-20 (MDIGKKHVIPKSQYRRKRRE) show a composition bias toward basic residues. The segment at 1–390 (MDIGKKHVIP…ATSKLNKGRA (390 aa)) is disordered. 2 stretches are compositionally biased toward basic and acidic residues: residues 21-64 (FFHN…ERFK) and 71-108 (LEQR…DVSK). Residues 126–137 (YEQNSEATLSTK) show a composition bias toward polar residues. Residues 138-186 (STDKVESTDMRKLSSDKNKVGHEEQHVLSKPSEHDKETRIDFESSRTDS) show a composition bias toward basic and acidic residues. Over residues 247-262 (QQSQNEQTKTYTYGDS) the composition is skewed to polar residues. Composition is skewed to basic and acidic residues over residues 264–296 (QNDK…HIVD) and 310–330 (KTDD…HKQN). The span at 331–347 (ADSSETVGYQSQSSASH) shows a compositional bias: polar residues. Residues 348–364 (RITEKRNNAINDHDKLN) are compositionally biased toward basic and acidic residues. Positions 366–390 (QKPNAKTSANNNQKKATSKLNKGRA) are enriched in polar residues. A helical membrane pass occupies residues 410–430 (LVILMGIIILIVILNAIFNNV). Residues His504, Asp534, and Ser619 each act as charge relay system in the active site. The PDZ domain maps to 680-733 (IASLNSFERQAVKLPGKVKNGVVVDQVDNNGLADQSGLKKGDVITELDGKLLED).

The protein belongs to the peptidase S1C family.

The protein resides in the cell membrane. In Staphylococcus aureus (strain MSSA476), this protein is Serine protease HtrA-like.